Here is a 452-residue protein sequence, read N- to C-terminus: 1,3-beta-glucanosyltransferase gel1 (452 aa).

Positions 1–19 are cleaved as a signal peptide; sequence MKASAVTAALAVGASTVLA. C71 and C100 are joined by a disulfide. (1,3-beta-D-glucosyl)n is bound by residues Y89, N159, E160, D201, and R206. E160 functions as the Proton donor in the catalytic mechanism. Intrachain disulfides connect C215–C345 and C233–C264. N-linked (GlcNAc...) asparagine glycosylation occurs at N249. The Nucleophile role is filled by E261. Y292 lines the (1,3-beta-D-glucosyl)n pocket. The span at 325 to 340 shows a compositional bias: polar residues; the sequence is EKTSNPSGDGNYNKTG. Residues 325–419 form a disordered region; that stretch reads EKTSNPSGDG…SGTSTSSKGA (95 aa). N337 carries an N-linked (GlcNAc...) asparagine glycan. Over residues 393–419 the composition is skewed to low complexity; that stretch reads STATAEPGSGSATGSSSSGTSTSSKGA. A419 is lipidated: GPI-like-anchor amidated alanine. A propeptide spans 420-452 (removed in mature form); the sequence is AAGLTVPSLTMAPVVVGAVTLLSTVFGAGLVLL.

It belongs to the glycosyl hydrolase 72 family. The GPI-like anchor contains a phosphoceramide lipid group.

Its subcellular location is the cell membrane. Functionally, splits internally a 1,3-beta-glucan molecule and transfers the newly generated reducing end (the donor) to the non-reducing end of another 1,3-beta-glucan molecule (the acceptor) forming a 1,3-beta linkage, resulting in the elongation of 1,3-beta-glucan chains in the cell wall. Involved in cell wall morphogenesis. This Aspergillus fumigatus (strain ATCC MYA-4609 / CBS 101355 / FGSC A1100 / Af293) (Neosartorya fumigata) protein is 1,3-beta-glucanosyltransferase gel1 (gel1).